The primary structure comprises 211 residues: MCPGNWLWASMTFMARFSRGSSRSPVRTRGSLEEMPSVHHPFLNVFELERLLYTGKTACNHADEVWPGLYLGDQDMANNRRELRRLGITHVLNASHNRWRGTPEAYEGLGIRYLGVEAHDSPAFDMSIHFQTAADFIHRALSQPGGKILVHCAVGVSRSATLVLAYLMLYHHFTLVEAIKKVKDHRGITPNRGFLRQLLALDRRLRQGLEA.

One can recognise a Tyrosine-protein phosphatase domain in the interval 60–207 (NHADEVWPGL…LLALDRRLRQ (148 aa)). Cysteine 152 serves as the catalytic Phosphocysteine intermediate.

It belongs to the protein-tyrosine phosphatase family. Non-receptor class dual specificity subfamily. As to quaternary structure, interacts with HSF4. In terms of tissue distribution, brain and skeletal muscle. In the brain it is expressed ubiquitously except in the hippocampus.

The protein localises to the cytoplasm. Its subcellular location is the nucleus. It is found in the golgi apparatus. It carries out the reaction O-phospho-L-tyrosyl-[protein] + H2O = L-tyrosyl-[protein] + phosphate. The enzyme catalyses O-phospho-L-seryl-[protein] + H2O = L-seryl-[protein] + phosphate. The catalysed reaction is O-phospho-L-threonyl-[protein] + H2O = L-threonyl-[protein] + phosphate. Inactivates MAPK1 and MAPK3 which leads to dephosphorylation of heat shock factor protein 4 and a reduction in its DNA-binding activity. The chain is Dual specificity protein phosphatase 26 (Dusp26) from Mus musculus (Mouse).